Here is a 258-residue protein sequence, read N- to C-terminus: uncharacterized protein (258 aa).

4 helical membrane passes run 33 to 53 (LFVI…VTTN), 59 to 79 (FDSW…IFVF), 88 to 108 (LLYL…FSFF), and 140 to 160 (IIAL…WLIQ). The segment at 237–258 (NNKINSELQPPSILNKNSKPIE) is disordered. The segment covering 242–258 (SELQPPSILNKNSKPIE) has biased composition (polar residues).

Its subcellular location is the membrane. This is an uncharacterized protein from Dictyostelium discoideum (Social amoeba).